The sequence spans 370 residues: uncharacterized protein (370 aa).

This is an uncharacterized protein from Acanthamoeba polyphaga (Amoeba).